We begin with the raw amino-acid sequence, 181 residues long: UPF0302 protein LMOf2365_1950 (181 aa).

It belongs to the UPF0302 family.

This is UPF0302 protein LMOf2365_1950 from Listeria monocytogenes serotype 4b (strain F2365).